The chain runs to 156 residues: Small ribosomal subunit protein uS7 (156 aa).

Belongs to the universal ribosomal protein uS7 family. Part of the 30S ribosomal subunit. Contacts proteins S9 and S11.

Its function is as follows. One of the primary rRNA binding proteins, it binds directly to 16S rRNA where it nucleates assembly of the head domain of the 30S subunit. Is located at the subunit interface close to the decoding center, probably blocks exit of the E-site tRNA. This chain is Small ribosomal subunit protein uS7, found in Thermoanaerobacter pseudethanolicus (strain ATCC 33223 / 39E) (Clostridium thermohydrosulfuricum).